The primary structure comprises 28 residues: Omega-conotoxin-like CnVIIH (28 aa).

3 disulfides stabilise this stretch: Cys-1–Cys-16, Cys-8–Cys-20, and Cys-15–Cys-27. A 4-hydroxyproline; partial modification is found at Pro-7. The residue at position 12 (Met-12) is a Methionine sulfoxide. Cysteine amide is present on Cys-27.

This sequence belongs to the conotoxin O1 superfamily. In terms of tissue distribution, expressed by the venom duct.

It localises to the secreted. Omega-conotoxins act at presynaptic membranes, they bind and block voltage-gated calcium channels (Cav). This toxin blocks N-type calcium channels (Cav2.2/CACNA1B) with high potency. Unexpectedly, it does not show any blocking activity at amphibian neuromuscular junction. In vivo, when intracerebroventricularly injected into mice causes shaking activity, and, at higher doses, causes mild tremors. When injected intramuscularly into fish, it causes paralysis, and, at higher doses, causes death. The chain is Omega-conotoxin-like CnVIIH from Conus consors (Singed cone).